The sequence spans 359 residues: Pyruvate dehydrogenase E1 component subunit beta, mitochondrial (359 aa).

The N-terminal 30 residues, 1-30 (MAAVSGLVRRPLREVSRLLKRRFHWTAPAA), are a transit peptide targeting the mitochondrion. Tyr-67 carries the phosphotyrosine modification. Glu-89 contacts thiamine diphosphate. 5 residues coordinate K(+): Ile-142, Ala-190, Ile-191, Asp-193, and Asn-195. Lys-354 is modified (N6-acetyllysine).

In terms of assembly, heterotetramer of two PDHA1 and two PDHB subunits. The heterotetramer interacts with DLAT, and is part of the multimeric pyruvate dehydrogenase complex that contains multiple copies of pyruvate dehydrogenase (E1), dihydrolipoamide acetyltransferase (DLAT, E2) and lipoamide dehydrogenase (DLD, E3). These subunits are bound to an inner core composed of about 48 DLAT and 12 PDHX molecules. Interacts with DLAT. Thiamine diphosphate is required as a cofactor.

Its subcellular location is the mitochondrion matrix. The enzyme catalyses N(6)-[(R)-lipoyl]-L-lysyl-[protein] + pyruvate + H(+) = N(6)-[(R)-S(8)-acetyldihydrolipoyl]-L-lysyl-[protein] + CO2. Functionally, the pyruvate dehydrogenase complex catalyzes the overall conversion of pyruvate to acetyl-CoA and CO(2), and thereby links the glycolytic pathway to the tricarboxylic cycle. In Pongo abelii (Sumatran orangutan), this protein is Pyruvate dehydrogenase E1 component subunit beta, mitochondrial (PDHB).